The chain runs to 575 residues: Flagellin B (575 aa).

It belongs to the bacterial flagellin family. Heteromer of flaA and flaB.

It is found in the secreted. The protein resides in the bacterial flagellum. Its function is as follows. Flagellin is the subunit protein which polymerizes to form the filaments of bacterial flagella. The sequence is that of Flagellin B (flaB) from Campylobacter jejuni.